Reading from the N-terminus, the 347-residue chain is NADH-ubiquinone oxidoreductase chain 2 (347 aa).

10 helical membrane passes run 1 to 21, 25 to 45, 59 to 79, 96 to 116, 122 to 142, 149 to 169, 200 to 220, 239 to 259, 274 to 294, and 325 to 345; these read MNPS…MMVI, HWLL…PIMM, YLLT…INLM, TLMT…FWVP, IPLT…LSIL, INLY…GWGG, LTLL…MLFI, IITT…PLSG, DILI…YFYM, and LLPT…MLSI.

The protein belongs to the complex I subunit 2 family. As to quaternary structure, core subunit of respiratory chain NADH dehydrogenase (Complex I) which is composed of 45 different subunits. Interacts with TMEM242.

Its subcellular location is the mitochondrion inner membrane. It carries out the reaction a ubiquinone + NADH + 5 H(+)(in) = a ubiquinol + NAD(+) + 4 H(+)(out). Its function is as follows. Core subunit of the mitochondrial membrane respiratory chain NADH dehydrogenase (Complex I) which catalyzes electron transfer from NADH through the respiratory chain, using ubiquinone as an electron acceptor. Essential for the catalytic activity and assembly of complex I. The chain is NADH-ubiquinone oxidoreductase chain 2 from Balaenoptera musculus (Blue whale).